The primary structure comprises 27 residues: uncharacterized protein (27 aa).

Its subcellular location is the plastid. It is found in the cyanelle. This is an uncharacterized protein from Cyanophora paradoxa.